Consider the following 164-residue polypeptide: UPF0304 protein YE1336 (164 aa).

This sequence belongs to the UPF0304 family.

This chain is UPF0304 protein YE1336, found in Yersinia enterocolitica serotype O:8 / biotype 1B (strain NCTC 13174 / 8081).